Consider the following 124-residue polypeptide: Ribonuclease pancreatic (124 aa).

The segment covering 1–13 has biased composition (basic and acidic residues); sequence SETAAEKFERQHM. Residues 1 to 23 form a disordered region; sequence SETAAEKFERQHMDSYSSSSSNS. Lysine 7 and arginine 10 together coordinate substrate. Histidine 12 serves as the catalytic Proton acceptor. Cystine bridges form between cysteine 26/cysteine 84, cysteine 40/cysteine 95, cysteine 58/cysteine 110, and cysteine 65/cysteine 72. Substrate is bound by residues 41-45, lysine 66, and arginine 85; that span reads KPVNT. The active-site Proton donor is histidine 119.

This sequence belongs to the pancreatic ribonuclease family. Monomer. Interacts with and forms tight 1:1 complexes with RNH1. Dimerization of two such complexes may occur. Interaction with RNH1 inhibits this protein. In terms of tissue distribution, pancreas.

Its subcellular location is the secreted. It catalyses the reaction an [RNA] containing cytidine + H2O = an [RNA]-3'-cytidine-3'-phosphate + a 5'-hydroxy-ribonucleotide-3'-[RNA].. The enzyme catalyses an [RNA] containing uridine + H2O = an [RNA]-3'-uridine-3'-phosphate + a 5'-hydroxy-ribonucleotide-3'-[RNA].. Functionally, endonuclease that catalyzes the cleavage of RNA on the 3' side of pyrimidine nucleotides. Acts on single-stranded and double-stranded RNA. The chain is Ribonuclease pancreatic (RNASE1) from Camelus bactrianus (Bactrian camel).